A 263-amino-acid chain; its full sequence is MPEGPEIRRAADNLEAAIKGKPLTDVWFAFPQLKSYQSQLIGQHVTHVETRGKALLTHFSNGLTLYSHNQLYGVWRVVDTGEEPQTTRVLRVKLQTADKTILLYSASDIEMLTPEQLTTHPFLQRVGPDVLDPNLTPEVVKERLLSPRFRNRQFAGLLLDQAFLAGLGNYLRVEILWQVGLTGNHKAKDLSAAQLDALAHALLDIPRLSYATRGQVDENKHHGALFRFKVFHRDGEPCERCGSIIEKTTLSSRPFYWCPGCQH.

Pro-2 acts as the Schiff-base intermediate with DNA in catalysis. Catalysis depends on Glu-3, which acts as the Proton donor. The active-site Proton donor; for beta-elimination activity is the Lys-53. Residues Gln-70, Arg-125, and Asn-169 each contribute to the DNA site. Residues 229–263 (KVFHRDGEPCERCGSIIEKTTLSSRPFYWCPGCQH) form an FPG-type zinc finger. Arg-253 acts as the Proton donor; for delta-elimination activity in catalysis.

This sequence belongs to the FPG family. The cofactor is Zn(2+).

The catalysed reaction is 2'-deoxyribonucleotide-(2'-deoxyribose 5'-phosphate)-2'-deoxyribonucleotide-DNA = a 3'-end 2'-deoxyribonucleotide-(2,3-dehydro-2,3-deoxyribose 5'-phosphate)-DNA + a 5'-end 5'-phospho-2'-deoxyribonucleoside-DNA + H(+). Functionally, involved in base excision repair of DNA damaged by oxidation or by mutagenic agents. Acts as a DNA glycosylase that recognizes and removes damaged bases. Has a preference for oxidized pyrimidines, such as thymine glycol, 5,6-dihydrouracil and 5,6-dihydrothymine. Has AP (apurinic/apyrimidinic) lyase activity and introduces nicks in the DNA strand. Cleaves the DNA backbone by beta-delta elimination to generate a single-strand break at the site of the removed base with both 3'- and 5'-phosphates. This is Endonuclease 8 from Escherichia coli O17:K52:H18 (strain UMN026 / ExPEC).